Consider the following 299-residue polypeptide: Taste receptor type 2 member 16 (299 aa).

The Extracellular segment spans residues methionine 1–glutamine 5. The helical transmembrane segment at valine 6–cysteine 26 threads the bilayer. The Cytoplasmic portion of the chain corresponds to threonine 27 to proline 44. A helical transmembrane segment spans residues valine 45–leucine 65. At tyrosine 66–serine 82 the chain is on the extracellular side. The helical transmembrane segment at valine 83–tyrosine 103 threads the bilayer. Residues cysteine 104–leucine 125 lie on the Cytoplasmic side of the membrane. A helical membrane pass occupies residues valine 126–valine 146. At lysine 147–methionine 183 the chain is on the extracellular side. Asparagine 163 carries an N-linked (GlcNAc...) asparagine glycan. A helical transmembrane segment spans residues isoleucine 184–leucine 204. At valine 205–threonine 233 the chain is on the cytoplasmic side. A helical membrane pass occupies residues phenylalanine 234 to phenylalanine 254. Residues aspartate 255 to serine 258 lie on the Extracellular side of the membrane. A helical transmembrane segment spans residues tryptophan 259–methionine 279. Residues methionine 280–serine 299 are Cytoplasmic-facing.

It belongs to the G-protein coupled receptor T2R family. In terms of assembly, interacts with RTP3 and RTP4. As to expression, expressed in subsets of taste receptor cells of the tongue and palate epithelium and exclusively in gustducin-positive cells. Expressed in the antrum and fundus (part of the stomach), duodenum and in gastric endocrine cells.

It localises to the cell membrane. In terms of biological role, gustducin-coupled receptor implicated in the perception of bitter compounds in the oral cavity and the gastrointestinal tract. Signals through PLCB2 and the calcium-regulated cation channel TRPM5. The polypeptide is Taste receptor type 2 member 16 (Tas2r16) (Rattus norvegicus (Rat)).